The chain runs to 410 residues: Iron-sulfur cluster assembly SufBD family protein MTH_1150 (410 aa).

The protein belongs to the iron-sulfur cluster assembly SufBD family.

The polypeptide is Iron-sulfur cluster assembly SufBD family protein MTH_1150 (Methanothermobacter thermautotrophicus (strain ATCC 29096 / DSM 1053 / JCM 10044 / NBRC 100330 / Delta H) (Methanobacterium thermoautotrophicum)).